Here is a 774-residue protein sequence, read N- to C-terminus: Transforming acidic coiled-coil-containing protein 1 (774 aa).

Ala2 is modified (N-acetylalanine). The interval 2–56 is interaction with LSM7 and SNRPG; the sequence is AFSPWQILSPVQWAKWTWSAVRGSGAGEDEAGGPEGDPEEEEDSQAETKSLSFSS. Residues Ser4, Ser10, and Ser45 each carry the phosphoserine modification. Residues 21–142 form a disordered region; sequence AVRGSGAGED…VKDVRGKAEH (122 aa). Over residues 28–46 the composition is skewed to acidic residues; that stretch reads GEDEAGGPEGDPEEEEDSQ. A compositionally biased stretch (polar residues) spans 48-61; the sequence is ETKSLSFSSDSEGN. Basic and acidic residues predominate over residues 88–99; that stretch reads PEAKPQESREAD. Over residues 113-128 the composition is skewed to polar residues; that stretch reads DTCSRSSENEAPQATV. The span at 131-142 shows a compositional bias: basic and acidic residues; it reads HPVKDVRGKAEH. Phosphoserine is present on residues Ser148 and Ser154. The tract at residues 153 to 255 is interaction with TDRD7; that stretch reads FSIETRNCTD…PEMLMEGSPL (103 aa). The segment at 207–424 is interaction with YEATS4; sequence EAFTEASLKT…NNINTDDSGD (218 aa). The tract at residues 214-428 is disordered; sequence LKTGGPCPEP…TDDSGDPCKP (215 aa). 2 consecutive SPAZ domains span residues 216 to 294 and 354 to 504; these read TGGP…TAGV and SKPV…TDEE. Ser228 bears the Phosphoserine; by AURKC mark. Over residues 228–241 the composition is skewed to basic residues; the sequence is SKLRKPKPVSLRKK. Residues Ser376 and Ser401 each carry the phosphoserine modification. Over residues 397 to 407 the composition is skewed to polar residues; that stretch reads ILQNSPPLSSK. The short motif at 452-468 is the Bipartite nuclear localization signal element; that stretch reads PKKAKSRLITSGCKVKK. Residues Ser480 and Ser560 each carry the phosphoserine modification. Residues 579–774 are a coiled coil; that stretch reads IREEIITKEI…ELIAKLGKTD (196 aa). The interaction with CH-TOG stretch occupies residues 670–774; the sequence is VLEGFKKNEE…ELIAKLGKTD (105 aa).

It belongs to the TACC family. As to quaternary structure, interacts with CH-TOG and YEATS4. Interacts with the AURKA and AURKB and AURKC. Interacts with LSM7, TDRD7 and SNRPG. Interacts with GCN5L2 and PCAF. Interacts with the thyroid hormone receptors THRB and THRA, predominantly with isoform alpha-2. The interaction with THRA isoform alpha-1 and THRB is decreased in the presence of thyroid hormone T3. Interacts with RARA in the nucleus. Also interacts with other nuclear receptors, including ESR1, NR3C1, PPARG and RXRA, preferentially in the absence of their hormonal ligands.

The protein localises to the cytoplasm. It localises to the nucleus. The protein resides in the cytoskeleton. It is found in the microtubule organizing center. Its subcellular location is the centrosome. The protein localises to the midbody. In terms of biological role, involved in transcription regulation induced by nuclear receptors, including in T3 thyroid hormone and all-trans retinoic acid pathways. Might promote the nuclear localization of the receptors. Likely involved in the processes that promote cell division prior to the formation of differentiated tissues. The polypeptide is Transforming acidic coiled-coil-containing protein 1 (Tacc1) (Mus musculus (Mouse)).